Here is a 178-residue protein sequence, read N- to C-terminus: Inorganic pyrophosphatase (178 aa).

Residues lysine 30, arginine 44, and tyrosine 56 each contribute to the substrate site. 3 residues coordinate Mg(2+): aspartate 66, aspartate 71, and aspartate 103. Residue tyrosine 140 coordinates substrate.

The protein belongs to the PPase family. As to quaternary structure, homohexamer. Mg(2+) serves as cofactor.

The protein localises to the cytoplasm. It carries out the reaction diphosphate + H2O = 2 phosphate + H(+). Catalyzes the hydrolysis of inorganic pyrophosphate (PPi) forming two phosphate ions. In Pyrococcus furiosus (strain ATCC 43587 / DSM 3638 / JCM 8422 / Vc1), this protein is Inorganic pyrophosphatase.